Consider the following 173-residue polypeptide: MKKLTVARLGRTVGLHGDMKLHILTDFPEQFQKGSTFESDRGSLTIESVNPARGTVKFQGIDSVDEAKKYTNAYLYSDEETTKKSFPLGEDEYFWFDILGCDVFEEGKRLGKVVDIQRLPAGDYLLVETDKSFVDMKKAKSFLIPFLDMFIEDVHLDQKRIDTKGAQDILEAS.

The region spanning 90–169 (EDEYFWFDIL…RIDTKGAQDI (80 aa)) is the PRC barrel domain.

This sequence belongs to the RimM family. In terms of assembly, binds ribosomal protein uS19.

The protein localises to the cytoplasm. An accessory protein needed during the final step in the assembly of 30S ribosomal subunit, possibly for assembly of the head region. Essential for efficient processing of 16S rRNA. May be needed both before and after RbfA during the maturation of 16S rRNA. It has affinity for free ribosomal 30S subunits but not for 70S ribosomes. The chain is Ribosome maturation factor RimM from Nitratiruptor sp. (strain SB155-2).